The chain runs to 140 residues: Nucleoside diphosphate kinase (140 aa).

The ATP site is built by lysine 11, phenylalanine 59, arginine 87, threonine 93, arginine 104, and asparagine 114. The active-site Pros-phosphohistidine intermediate is histidine 117.

The protein belongs to the NDK family. Homotetramer. Requires Mg(2+) as cofactor.

The protein localises to the cytoplasm. It catalyses the reaction a 2'-deoxyribonucleoside 5'-diphosphate + ATP = a 2'-deoxyribonucleoside 5'-triphosphate + ADP. The enzyme catalyses a ribonucleoside 5'-diphosphate + ATP = a ribonucleoside 5'-triphosphate + ADP. Its function is as follows. Major role in the synthesis of nucleoside triphosphates other than ATP. The ATP gamma phosphate is transferred to the NDP beta phosphate via a ping-pong mechanism, using a phosphorylated active-site intermediate. This Mesorhizobium japonicum (strain LMG 29417 / CECT 9101 / MAFF 303099) (Mesorhizobium loti (strain MAFF 303099)) protein is Nucleoside diphosphate kinase.